The chain runs to 98 residues: Large ribosomal subunit protein bL25 (98 aa).

The segment at 1–23 (MANFVLNAQARAEDKQGKGASRR) is disordered.

This sequence belongs to the bacterial ribosomal protein bL25 family. In terms of assembly, part of the 50S ribosomal subunit; part of the 5S rRNA/L5/L18/L25 subcomplex. Contacts the 5S rRNA. Binds to the 5S rRNA independently of L5 and L18.

In terms of biological role, this is one of the proteins that binds to the 5S RNA in the ribosome where it forms part of the central protuberance. The sequence is that of Large ribosomal subunit protein bL25 from Acinetobacter baumannii (strain AB307-0294).